The following is a 388-amino-acid chain: Succinate--CoA ligase [ADP-forming] subunit beta (388 aa).

An ATP-grasp domain is found at 9 to 244 (KQLFAEYGLP…PSQDDPREAH (236 aa)). ATP contacts are provided by residues Lys46, 53-55 (GRG), Glu99, Thr102, and Glu107. Mg(2+)-binding residues include Asn199 and Asp213. Residues Asn264 and 321–323 (GIV) each bind substrate.

This sequence belongs to the succinate/malate CoA ligase beta subunit family. As to quaternary structure, heterotetramer of two alpha and two beta subunits. The cofactor is Mg(2+).

The catalysed reaction is succinate + ATP + CoA = succinyl-CoA + ADP + phosphate. It catalyses the reaction GTP + succinate + CoA = succinyl-CoA + GDP + phosphate. It participates in carbohydrate metabolism; tricarboxylic acid cycle; succinate from succinyl-CoA (ligase route): step 1/1. Succinyl-CoA synthetase functions in the citric acid cycle (TCA), coupling the hydrolysis of succinyl-CoA to the synthesis of either ATP or GTP and thus represents the only step of substrate-level phosphorylation in the TCA. The beta subunit provides nucleotide specificity of the enzyme and binds the substrate succinate, while the binding sites for coenzyme A and phosphate are found in the alpha subunit. The protein is Succinate--CoA ligase [ADP-forming] subunit beta of Pseudomonas fluorescens (strain SBW25).